Here is a 545-residue protein sequence, read N- to C-terminus: Bifunctional purine biosynthesis protein PurH (545 aa).

The MGS-like domain maps to methionine 1 to threonine 150.

It belongs to the PurH family.

The enzyme catalyses (6R)-10-formyltetrahydrofolate + 5-amino-1-(5-phospho-beta-D-ribosyl)imidazole-4-carboxamide = 5-formamido-1-(5-phospho-D-ribosyl)imidazole-4-carboxamide + (6S)-5,6,7,8-tetrahydrofolate. It catalyses the reaction IMP + H2O = 5-formamido-1-(5-phospho-D-ribosyl)imidazole-4-carboxamide. It functions in the pathway purine metabolism; IMP biosynthesis via de novo pathway; 5-formamido-1-(5-phospho-D-ribosyl)imidazole-4-carboxamide from 5-amino-1-(5-phospho-D-ribosyl)imidazole-4-carboxamide (10-formyl THF route): step 1/1. The protein operates within purine metabolism; IMP biosynthesis via de novo pathway; IMP from 5-formamido-1-(5-phospho-D-ribosyl)imidazole-4-carboxamide: step 1/1. This Bifidobacterium longum (strain NCC 2705) protein is Bifunctional purine biosynthesis protein PurH.